The following is a 1941-amino-acid chain: Integrin beta-like protein B (1941 aa).

A signal peptide spans 1–20 (MKNIIKYLFIFLCFLIITEA). The Extracellular portion of the chain corresponds to 21–1871 (THFRYGTISW…VTTQNSSNKT (1851 aa)). Residues 420-457 (YGDKCTVLPPCKNGVPNGGVNGDGKCLCNNGWTGSDCS) enclose the EGF-like domain. Disulfide bonds link cysteine 430/cysteine 445 and cysteine 447/cysteine 456. The region spanning 513–696 (DVYLLVDANM…AGIKAVSSKL (184 aa)) is the VWFA domain. N-linked (GlcNAc...) asparagine glycosylation is found at asparagine 1400, asparagine 1505, asparagine 1530, asparagine 1606, asparagine 1652, asparagine 1738, asparagine 1777, asparagine 1848, asparagine 1866, and asparagine 1869. Residues 1872–1892 (VLSGAIAGAAAGTALIAAAMW) form a helical membrane-spanning segment. The Cytoplasmic portion of the chain corresponds to 1893–1941 (KMLRKAAPPTDAFFDEGAFLGDGVNSNPMYQESKNGGENPLYLASNETL). Positions 1921-1941 (MYQESKNGGENPLYLASNETL) are disordered.

Belongs to the SIB family. In terms of assembly, interacts with talA/talin.

It localises to the membrane. Implicated in cellular adhesion. The protein is Integrin beta-like protein B (sibB) of Dictyostelium discoideum (Social amoeba).